The sequence spans 394 residues: Phosphoglycerate kinase (394 aa).

Substrate contacts are provided by residues 21–23 (DFN), R36, 59–62 (HLGR), R118, and R151. A Phosphoserine modification is found at S183. K201 lines the ATP pocket. T299 is modified (phosphothreonine). ATP is bound by residues E323 and 350-353 (GGDS).

The protein belongs to the phosphoglycerate kinase family. As to quaternary structure, monomer.

It localises to the cytoplasm. The catalysed reaction is (2R)-3-phosphoglycerate + ATP = (2R)-3-phospho-glyceroyl phosphate + ADP. The protein operates within carbohydrate degradation; glycolysis; pyruvate from D-glyceraldehyde 3-phosphate: step 2/5. The polypeptide is Phosphoglycerate kinase (pgk) (Bacillus subtilis (strain 168)).